We begin with the raw amino-acid sequence, 500 residues long: NAD(P)H-quinone oxidoreductase chain 4, chloroplastic (500 aa).

14 helical membrane-spanning segments follow: residues 4 to 24, 35 to 55, 87 to 107, 113 to 130, 134 to 154, 167 to 187, 208 to 228, 242 to 262, 274 to 294, 305 to 325, 330 to 350, 386 to 406, 416 to 436, and 463 to 483; these read FPWL…IFFL, YTMG…CYHF, IGPI…AWPV, LFHF…GLFS, LLLF…LLSM, FILY…GMGL, GLEI…LPII, HYST…YGLI, SIFS…AALT, IAYS…SLTN, GAIL…FLGG, LALP…GIIT, IIIT…LLSM, and FVSI…DLVI.

It belongs to the complex I subunit 4 family.

Its subcellular location is the plastid. It localises to the chloroplast thylakoid membrane. It carries out the reaction a plastoquinone + NADH + (n+1) H(+)(in) = a plastoquinol + NAD(+) + n H(+)(out). The catalysed reaction is a plastoquinone + NADPH + (n+1) H(+)(in) = a plastoquinol + NADP(+) + n H(+)(out). The chain is NAD(P)H-quinone oxidoreductase chain 4, chloroplastic from Lemna minor (Common duckweed).